We begin with the raw amino-acid sequence, 1633 residues long: D-lysergyl-peptide-synthetase subunit 3 (1633 aa).

Residues Phe80 to Arg483 form an adenylation (A) domain region. The 70-residue stretch at Glu622–Ser691 folds into the Carrier domain. Residue Ser654 is modified to O-(pantetheine 4'-phosphoryl)serine. Residues Pro836–Ala1127 are condensation (C) domain. Positions Val1256–Trp1483 are reductase (R) domain.

It belongs to the NRP synthetase family.

It participates in alkaloid biosynthesis; ergot alkaloid biosynthesis. Functionally, D-lysergyl-peptide-synthetase subunit 3; part of the gene cluster that mediates the biosynthesis of fungal ergot alkaloid. DmaW catalyzes the first step of ergot alkaloid biosynthesis by condensing dimethylallyl diphosphate (DMAP) and tryptophan to form 4-dimethylallyl-L-tryptophan. The second step is catalyzed by the methyltransferase easF that methylates 4-dimethylallyl-L-tryptophan in the presence of S-adenosyl-L-methionine, resulting in the formation of 4-dimethylallyl-L-abrine. The catalase easC and the FAD-dependent oxidoreductase easE then transform 4-dimethylallyl-L-abrine to chanoclavine-I which is further oxidized by easD in the presence of NAD(+), resulting in the formation of chanoclavine-I aldehyde. Agroclavine dehydrogenase easG then mediates the conversion of chanoclavine-I aldehyde to agroclavine via a non-enzymatic adduct reaction: the substrate is an iminium intermediate that is formed spontaneously from chanoclavine-I aldehyde in the presence of glutathione. The presence of easA is not required to complete this reaction. Further conversion of agroclavine to paspalic acid is a two-step process involving oxidation of agroclavine to elymoclavine and of elymoclavine to paspalic acid, the second step being performed by the elymoclavine oxidase cloA. Paspalic acid is then further converted to D-lysergic acid. Ergopeptines are assembled from D-lysergic acid and three different amino acids by the D-lysergyl-peptide-synthetases composed each of a monomudular and a trimodular nonribosomal peptide synthetase subunit. LpsB and lpsC encode the monomodular subunits responsible for D-lysergic acid activation and incorporation into the ergopeptine backbone. LpsA1 and A2 subunits encode the trimodular nonribosomal peptide synthetase assembling the tripeptide portion of ergopeptines. LpsA1 is responsible for formation of the major ergopeptine, ergotamine, and lpsA2 for alpha-ergocryptine, the minor ergopeptine of the total alkaloid mixture elaborated by C.purpurea. D-lysergyl-tripeptides are assembled by the nonribosomal peptide synthetases and released as N-(D-lysergyl-aminoacyl)-lactams. Cyclolization of the D-lysergyl-tripeptides is performed by the Fe(2+)/2-ketoglutarate-dependent dioxygenase easH which introduces a hydroxyl group into N-(D-lysergyl-aminoacyl)-lactam at alpha-C of the aminoacyl residue followed by spontaneous condensation with the terminal lactam carbonyl group. The sequence is that of D-lysergyl-peptide-synthetase subunit 3 from Claviceps purpurea (Ergot fungus).